We begin with the raw amino-acid sequence, 71 residues long: Conotoxin Bu25 (71 aa).

The signal sequence occupies residues 1 to 21 (MGMRMMVTVFPLVVLATTVVS). Residues 22–44 (LRSNRASDGRRGIVNKLNDLVPK) constitute a propeptide that is removed on maturation. Arg-70 bears the Arginine amide mark.

Belongs to the conotoxin A superfamily. In terms of processing, contains 3 disulfide bonds. They are not indicated here, since framework IV presents two different connectivities (I-V, II-III, IV-VI and I-III, II-V, IV-VI). As to expression, expressed by the venom duct.

It localises to the secreted. In Conus bullatus (Bubble cone), this protein is Conotoxin Bu25.